The following is a 1223-amino-acid chain: MMSLSVRPQRRLLSARVNRSQSFAGVLGSHERGPSLSFRSFPVFSPPGPPRKPPALSRVSRMFSVAHPAAKVPQPERLDLVYTALKRGLTAYLEVHQQEQEKLQGQIRESKRNSRLGFLYDLDKQVKSIERFLRRLEFHASKIDELYEAYCVQRRLRDGAYNMVRAYTTGSPGSREARDSLAEATRGHREYTESMCLLESELEAQLGEFHLRMKGLAGFARLCVGDQYEICMKYGRQRWKLRGRIEGSGKQVWDSEETIFLPLLTEFLSIKVTELKGLANHVVVGSVSCETKDLFAALPQVVAVDINDLGTIKLSLEVTWSPFDKDDQPSAASSVNKASTVTKRFSTYSQSPPDTPSLREQAFYNMLRRQEELENGTAWSLSSESSDDSSSPQLSGTARHSPAPRPLVQQPEPLPIQVAFRRPETPSSGPLDEEGAVAPVLANGHAPYSRTLSHISEASVDAALAEASVEAVGPESLAWGPSPPTHPAPTHGEHPSPVPPALDPGHSATSSTLGTTGSVPTSTDPAPSAHLDSVHKSTDSGPSELPGPTHTTTGSTYSAITTTHSAPSPLTHTTTGSTHKPIISTLTTTGPTLNIIGPVQTTTSPTHTMPSPTHTTASPTHTSTSPTHTPTSPTHKTSMSPPTTTSPTPSGMGLVQTATSPTHPTTSPTHPTTSPILINVSPSTSLELATLSSPSKHSDPTLPGTDSLPCSPPVSNSYTQADPMAPRTPHPSPAHSSRKPLTSPAPDPSESTVQSLSPTPSPPTPAPQHSDLCLAMAVQTPVPTAAGGSGDRSLEEALGALMAALDDYRGQFPELQGLEQEVTRLESLLMQRQGLTRSRASSLSITVEHALESFSFLNEDEDEDNDVPGDRPPSSPEAGAEDSIDSPSARPLSTGCPALDAALVRHLYHCSRLLLKLGTFGPLRCQEAWALERLLREARVLEAVCEFSRRWEIPASSAQEVVQFSASRPGFLTFWDQCTERLSCFLCPVERVLLTFCNQYGARLSLRQPGLAEAVCVKFLEDALGQKLPRRPQPGPGEQLTVFQFWSFVETLDSPTMEAYVTETAEEVLLVRNLNSDDQAVVLKALRLAPEGRLRRDGLRALSSLLVHGNNKVMAAVSTQLRSLSLGPTFRERALLCFLDQLEDEDVQTRVAGCLALGCIKAPEGIEPLVYLCQTDTEAVREAARQSLQQCGEEGQSAHRRLEESLDALPRIFGPGSMASTAF.

Ser22 is subject to Phosphoserine. A coiled-coil region spans residues 89–114; that stretch reads LTAYLEVHQQEQEKLQGQIRESKRNS. Phosphoserine occurs at positions 349 and 351. Thr355 carries the post-translational modification Phosphothreonine. A disordered region spans residues 375–411; that stretch reads NGTAWSLSSESSDDSSSPQLSGTARHSPAPRPLVQQP. Over residues 380-395 the composition is skewed to low complexity; it reads SLSSESSDDSSSPQLS. Phosphoserine occurs at positions 456 and 459. 2 disordered regions span residues 475-769 and 856-889; these read ESLA…APQH and FLNE…SPSA. 2 stretches are compositionally biased toward low complexity: residues 505–523 and 546–564; these read GHSA…PTST and PGPT…TTTH. The span at 565–592 shows a compositional bias: polar residues; the sequence is SAPSPLTHTTTGSTHKPIISTLTTTGPT. Low complexity-rich tracts occupy residues 601–650 and 659–675; these read TTTS…PTPS and TSPT…TTSP. Polar residues predominate over residues 680–695; it reads VSPSTSLELATLSSPS. Residues 858–867 are compositionally biased toward acidic residues; sequence NEDEDEDNDV. 2 positions are modified to phosphoserine: Ser874 and Ser875.

The protein belongs to the RIPOR family. In terms of assembly, interacts (via N-terminus) with RHOA (GTP-bound form); this interaction links active RHOA to STK24 and STK26 kinases. Interacts with RHOB. Interacts with RHOC. Interacts (via C-terminus) with PDCD10; this interaction occurs in a Rho-independent manner. Interacts (via C-terminus) with STK24; this interaction occurs in a PDCD10-dependent and Rho-independent manner. Interacts (via C-terminus) with STK26; this interaction occurs in a PDCD10-dependent and Rho-independent manner. Interacts (via N-terminus) with 14-3-3 proteins; these interactions occur in a Rho-dependent manner.

The protein resides in the cytoplasm. It localises to the golgi apparatus. Its function is as follows. Downstream effector protein for Rho-type small GTPases that plays a role in cell polarity and directional migration. Acts as an adapter protein, linking active Rho proteins to STK24 and STK26 kinases, and hence positively regulates Golgi reorientation in polarized cell migration upon Rho activation. Involved in the subcellular relocation of STK26 from the Golgi to cytoplasm punctae in a Rho- and PDCD10-dependent manner upon serum stimulation. This is Rho family-interacting cell polarization regulator 1 (RIPOR1) from Homo sapiens (Human).